Consider the following 265-residue polypeptide: ATP synthase subunit a (265 aa).

6 helical membrane-spanning segments follow: residues 26–46, 88–108, 132–152, 168–188, 195–217, and 231–251; these read VHLD…FFFY, IGSL…IDLI, DISA…FYTI, PFNH…TLLA, FRLF…MYMA, and LIWA…FMML.

The protein belongs to the ATPase A chain family. As to quaternary structure, F-type ATPases have 2 components, CF(1) - the catalytic core - and CF(0) - the membrane proton channel. CF(1) has five subunits: alpha(3), beta(3), gamma(1), delta(1), epsilon(1). CF(0) has three main subunits: a(1), b(2) and c(9-12). The alpha and beta chains form an alternating ring which encloses part of the gamma chain. CF(1) is attached to CF(0) by a central stalk formed by the gamma and epsilon chains, while a peripheral stalk is formed by the delta and b chains.

It is found in the cell inner membrane. Functionally, key component of the proton channel; it plays a direct role in the translocation of protons across the membrane. The protein is ATP synthase subunit a of Histophilus somni (strain 2336) (Haemophilus somnus).